The sequence spans 498 residues: ADP,ATP carrier protein 1 (498 aa).

At methionine 1–phenylalanine 33 the chain is on the cytoplasmic side. The helical transmembrane segment at methionine 34 to valine 54 threads the bilayer. A disulfide bridge connects residues cysteine 37 and cysteine 85. The Extracellular portion of the chain corresponds to threonine 55 to threonine 67. The helical transmembrane segment at tyrosine 68–leucine 88 threads the bilayer. At lysine 89–asparagine 92 the chain is on the cytoplasmic side. Residues valine 93–tyrosine 113 traverse the membrane as a helical segment. At proline 114–serine 147 the chain is on the extracellular side. Residues phenylalanine 148–tryptophan 168 traverse the membrane as a helical segment. At glutamine 169–tyrosine 184 the chain is on the cytoplasmic side. A helical transmembrane segment spans residues serine 185 to phenylalanine 205. The Extracellular segment spans residues leucine 206 to lysine 218. The helical transmembrane segment at phenylalanine 219–tryptophan 239 threads the bilayer. The Cytoplasmic portion of the chain corresponds to methionine 240 to tyrosine 279. Residues valine 280–valine 300 traverse the membrane as a helical segment. The Extracellular portion of the chain corresponds to tryptophan 301–glycine 320. The helical transmembrane segment at glutamine 321–leucine 341 threads the bilayer. Over arginine 342–threonine 348 the chain is Cytoplasmic. The helical transmembrane segment at alanine 349 to phenylalanine 369 threads the bilayer. Residues phenylalanine 370–threonine 379 lie on the Extracellular side of the membrane. The chain crosses the membrane as a helical span at residues glycine 380–leucine 400. Over serine 401–arginine 438 the chain is Cytoplasmic. Glycine 436–serine 442 provides a ligand contact to ATP. Residues leucine 439 to glycine 459 form a helical membrane-spanning segment. Over phenylalanine 460 to proline 465 the chain is Extracellular. Residues tyrosine 466–asparagine 486 form a helical membrane-spanning segment. Over lysine 487–lysine 498 the chain is Cytoplasmic.

It belongs to the ADP/ATP translocase tlc family.

It localises to the cell membrane. Its function is as follows. Provides the rickettsial cell with host ATP in exchange for rickettsial ADP. This is an obligate exchange system. This energy acquiring activity is an important component of rickettsial parasitism. This Rickettsia prowazekii (strain Madrid E) protein is ADP,ATP carrier protein 1 (tlcA).